A 218-amino-acid polypeptide reads, in one-letter code: Ribonuclease HII (218 aa).

The RNase H type-2 domain maps to 23–216; sequence RFLCGVDEAG…VREAIARGLV (194 aa). A divalent metal cation is bound by residues Asp-29, Glu-30, and Asp-125.

The protein belongs to the RNase HII family. Requires Mn(2+) as cofactor. The cofactor is Mg(2+).

The protein resides in the cytoplasm. It carries out the reaction Endonucleolytic cleavage to 5'-phosphomonoester.. Endonuclease that specifically degrades the RNA of RNA-DNA hybrids. In Cupriavidus pinatubonensis (strain JMP 134 / LMG 1197) (Cupriavidus necator (strain JMP 134)), this protein is Ribonuclease HII.